Reading from the N-terminus, the 345-residue chain is Selenide, water dikinase (345 aa).

The active site involves cysteine 16. ATP-binding positions include lysine 19 and 45–47 (TSE). Mg(2+) is bound at residue aspartate 48. Residues aspartate 65, aspartate 88, and 136–138 (GHT) each bind ATP. Aspartate 88 is a Mg(2+) binding site. Aspartate 224 is a Mg(2+) binding site.

Belongs to the selenophosphate synthase 1 family. Class I subfamily. Homodimer. Mg(2+) serves as cofactor.

It carries out the reaction hydrogenselenide + ATP + H2O = selenophosphate + AMP + phosphate + 2 H(+). Its function is as follows. Synthesizes selenophosphate from selenide and ATP. This Aliarcobacter butzleri (strain RM4018) (Arcobacter butzleri) protein is Selenide, water dikinase.